Here is a 352-residue protein sequence, read N- to C-terminus: Secretion system apparatus protein SsaU (352 aa).

4 helical membrane-spanning segments follow: residues 34–54, 89–109, 144–164, and 176–196; these read LIAL…ILIE, LGAG…GVVI, LKVI…ASTF, and VLVV…FYIV.

This sequence belongs to the type III secretion exporter family.

It is found in the cell membrane. In terms of biological role, part of a type III secretion system. The sequence is that of Secretion system apparatus protein SsaU (ssaU) from Salmonella typhimurium (strain LT2 / SGSC1412 / ATCC 700720).